Consider the following 109-residue polypeptide: Large ribosomal subunit protein bL31B (109 aa).

Residues 79–109 (NVRQPAQQPQPEEDALPAAKGKKKVVTKKKK) are disordered. The segment covering 98–109 (KGKKKVVTKKKK) has biased composition (basic residues).

This sequence belongs to the bacterial ribosomal protein bL31 family. Type B subfamily. In terms of assembly, part of the 50S ribosomal subunit.

The polypeptide is Large ribosomal subunit protein bL31B (Chlamydia pneumoniae (Chlamydophila pneumoniae)).